Consider the following 1169-residue polypeptide: MNKILEKIQNNTTILIEASAGTGKTHILENVVINLIKTKLYSINEILVLTFTKKATEEMHTRILKVIENAYSNSKTNEILKEAYEQSKKLFISTINKFALHALNNFQIETENYSKYKPKEKFSKEIDEIVYDFLRKSDSLIQALDIKDYELKVFKSDAKKTEEIVLKIKKAYERDTTQELGDWLKTQTAFENILLKKEELIKDYNKIIEDLDKMTKDEILSFYNKHIQTGKLEIEYSKENDIFKIAETLLKNKFFSTLIEKETKKNSKLSPKELKIKNDLICLGINIKHEKYKSEDNRNKNRNNLKQYVILKVEYKILKYIEKELKKTIKSTNTIDQNYIISNLKNYLKSEDKKLLNAIKNRYKIILIDEAQDLSLIQIEIFKILKTAGIKLIFIADPKQIIYSFRKADISFYNKEIKNKINTDARIVLKINHRSSKKLIGPLNKIFNNIYNNAIADEIEKIDFTNSLPNQKNDNNKIVINGQEIEGINIITTNTESEEDIYQKTALTIKYLLAYGKIAENNKIRNIKMQDIKVLCRGKNEINLIDKALKKEQIQTNKTQEKFLKTKEFSEIFYIIKCLDRKQSFKTLNYILSSKILNVPWNLQRILIKQDKICLIEEFIENIIVLLEKNEITLINAINKITFEKNLWIKIANITKDQKIIEWAKNKINYKGLLIKEGKLENLKTYETTLEIISKIYHKEQNIQSLISTLESLIINEEPEEIEEKINNINNDNESIELMTIHKSKGLGMNIVFLLNTTPIENSNFFSKKNQFYKFYQDGKIEYDFFKLEENKKYARLKILSEEKNIFYVGATRAKFALFIIKINSITSKLLEIAKIFTIDDIKHDFNIHEFIGQKRFNKKKYNTNVNTKLIPPKPIIKNMFKKEYTSSFSSLTAQAHHKEFYENYDFKNINYEKETELDYEPGLEETLPKGKDIGNILHAAMEEIIFSTAKDTFDNFKKNNIEIIEKQIQKINSNLNTIEIQNSLAKMIYNILTYNIRAINTRLCDIEELQKEMEFLIKINPEFQKQKYLFDKHFEDLHIKLSDGYLKGIVDLIFKANNKIYILDYKTNYLGKNKEDYNITNLENTIKKEYYDLQYKIYALGIKKILFKNKKEYNQKFGGIIYLFTRAFEDNIECLKSKFENGIYFNLPKFNDVDLDKIILELGIKRHL.

In terms of domain architecture, UvrD-like helicase ATP-binding spans 1–436 (MNKILEKIQN…IVLKINHRSS (436 aa)). A DNA-binding and helicase activity, interacts with RecC region spans residues 1–839 (MNKILEKIQN…LLEIAKIFTI (839 aa)). 18–25 (ASAGTGKT) contributes to the ATP binding site. In terms of domain architecture, UvrD-like helicase C-terminal spans 459 to 746 (IEKIDFTNSL…ELMTIHKSKG (288 aa)). The nuclease activity, interacts with RecD and RecA stretch occupies residues 883–1169 (KEYTSSFSSL…ILELGIKRHL (287 aa)). Mg(2+)-binding residues include histidine 939, aspartate 1052, and aspartate 1065. Aspartate 1065 (for nuclease activity) is an active-site residue.

This sequence belongs to the helicase family. UvrD subfamily. In terms of assembly, heterotrimer of RecB, RecC and RecD. All subunits contribute to DNA-binding. Interacts with RecA. Mg(2+) serves as cofactor.

The enzyme catalyses Exonucleolytic cleavage (in the presence of ATP) in either 5'- to 3'- or 3'- to 5'-direction to yield 5'-phosphooligonucleotides.. The catalysed reaction is Couples ATP hydrolysis with the unwinding of duplex DNA by translocating in the 3'-5' direction.. It catalyses the reaction ATP + H2O = ADP + phosphate + H(+). Functionally, a helicase/nuclease that prepares dsDNA breaks (DSB) for recombinational DNA repair. Binds to DSBs and unwinds DNA via a highly rapid and processive ATP-dependent bidirectional helicase activity. Unwinds dsDNA until it encounters a Chi (crossover hotspot instigator) sequence from the 3' direction. Cuts ssDNA a few nucleotides 3' to the Chi site. The properties and activities of the enzyme are changed at Chi. The Chi-altered holoenzyme produces a long 3'-ssDNA overhang and facilitates RecA-binding to the ssDNA for homologous DNA recombination and repair. Holoenzyme degrades any linearized DNA that is unable to undergo homologous recombination. In the holoenzyme this subunit contributes ATPase, 3'-5' helicase, exonuclease activity and loads RecA onto ssDNA. The protein is RecBCD enzyme subunit RecB of Borreliella burgdorferi (strain ATCC 35210 / DSM 4680 / CIP 102532 / B31) (Borrelia burgdorferi).